The following is a 905-amino-acid chain: Respiratory burst oxidase homolog protein B (905 aa).

Disordered regions lie at residues 1–46 (MADL…KTAR) and 69–134 (EVRG…VRKR). The Cytoplasmic segment spans residues 1–355 (MADLEAGMVA…MYFLEENWKR (355 aa)). Over residues 29–44 (IPNSGNLGSSNRSTKT) the composition is skewed to polar residues. Gly residues predominate over residues 75-84 (EGGSGHGTGF). The span at 91–108 (SPSSKSGKLTSKLRQVTN) shows a compositional bias: polar residues. 2 EF-hand-like regions span residues 172–180 (QVDGVLLRS) and 206–217 (RGIVKQVLTKDE). EF-hand domains follow at residues 229-264 (GFDNRLRTFFDMVDKNADGRLTAEEVKEIIALSASA) and 273-308 (RADEYTALIMEELDPTNLGYIEMEDLEALLLQSPSE). Ca(2+) contacts are provided by Asp242, Asn244, Asp246, Arg248, and Glu253. The chain crosses the membrane as a helical span at residues 356-376 (SWVMTLWISICIALFIWKFIQ). Topologically, residues 377 to 440 (YRNRAVFGIM…FNDNINFHKV (64 aa)) are extracellular. Residues 395-551 (GAAETLKFNM…HLFVIVYTLL (157 aa)) form the Ferric oxidoreductase domain. The chain crosses the membrane as a helical span at residues 441-461 (IAAGVAVGVALHAGAHLTCDF). Over 462–496 (PRLLHASDAQYELMKPFFGEKRPPNYWWFVKGTEG) the chain is Cytoplasmic. The helical transmembrane segment at 497-517 (WTGVVMVVLMAIAFTLAQPWF) threads the bilayer. Residues 518–539 (RRNKLKDSNPLKKMTGFNAFWF) are Extracellular-facing. The helical transmembrane segment at 540 to 560 (THHLFVIVYTLLFVHGTCLYL) threads the bilayer. Topologically, residues 561–568 (SRKWYKKT) are cytoplasmic. A helical membrane pass occupies residues 569–586 (TWMYLAVPVVLYVSERIL). The 129-residue stretch at 587-715 (RLFRSHDAVG…DGPYGAPAQD (129 aa)) folds into the FAD-binding FR-type domain. Residues 587–717 (RLFRSHDAVG…PYGAPAQDYR (131 aa)) are Extracellular-facing. A helical membrane pass occupies residues 718–738 (EYDVLLLIGLGIGATPLISIV). Over 739–905 (KDVLNHIQGE…TRFDFHKENF (167 aa)) the chain is Cytoplasmic.

The protein belongs to the RBOH (TC 5.B.1.3) family. In terms of assembly, monomer and homodimer, stabilized by swapping the EF-hand motifs. Interacts with GTP-bound RAC1.

Its subcellular location is the membrane. Its function is as follows. Calcium-dependent NADPH oxidase that generates superoxide. This is Respiratory burst oxidase homolog protein B (RBOHB) from Oryza sativa subsp. japonica (Rice).